We begin with the raw amino-acid sequence, 216 residues long: Noggin-1 (216 aa).

The N-terminal stretch at 1–18 (MDFPRFLLSAYLLLLSFA) is a signal peptide. Asparagine 55 carries N-linked (GlcNAc...) asparagine glycosylation.

It belongs to the noggin family. Homodimer; disulfide-linked.

It is found in the secreted. In terms of biological role, inhibitor of bone morphogenetic proteins (BMP) signaling. May play an important role in the dorsoventral patterning of the embryo. The polypeptide is Noggin-1 (nog1) (Danio rerio (Zebrafish)).